The following is a 127-amino-acid chain: Major sperm protein 10/36/56/76 (127 aa).

Position 2 is an N-acetylalanine (alanine 2). Residues 9–126 (DIQTQPNAKI…RRKNLPIEYN (118 aa)) enclose the MSP domain.

As to expression, sperm.

It is found in the cell projection. The protein localises to the pseudopodium. Its subcellular location is the cytoplasm. It localises to the cytoskeleton. Its function is as follows. Central component in molecular interactions underlying sperm crawling. Forms an extensive filament system that extends from sperm villipoda, along the leading edge of the pseudopod. In Caenorhabditis elegans, this protein is Major sperm protein 10/36/56/76 (msp-10).